The sequence spans 39 residues: MERNPNPNNLPVELNRTSLYLGLLVVFTTGILFSSYFFN.

A helical transmembrane segment spans residues 18–38 (SLYLGLLVVFTTGILFSSYFF).

This sequence belongs to the PsbL family. In terms of assembly, PSII is composed of 1 copy each of membrane proteins PsbA, PsbB, PsbC, PsbD, PsbE, PsbF, PsbH, PsbI, PsbJ, PsbK, PsbL, PsbM, PsbT, PsbX, PsbY, PsbZ, Psb30/Ycf12, peripheral proteins PsbO, CyanoQ (PsbQ), PsbU, PsbV and a large number of cofactors. It forms dimeric complexes.

Its subcellular location is the cellular thylakoid membrane. In terms of biological role, one of the components of the core complex of photosystem II (PSII). PSII is a light-driven water:plastoquinone oxidoreductase that uses light energy to abstract electrons from H(2)O, generating O(2) and a proton gradient subsequently used for ATP formation. It consists of a core antenna complex that captures photons, and an electron transfer chain that converts photonic excitation into a charge separation. This subunit is found at the monomer-monomer interface and is required for correct PSII assembly and/or dimerization. This chain is Photosystem II reaction center protein L, found in Synechococcus sp. (strain WH7803).